The chain runs to 368 residues: POU domain, class 3, transcription factor 1 (368 aa).

Residues 1–16 (MATTAQYIPRNNSLPS) show a composition bias toward polar residues. Disordered stretches follow at residues 1-28 (MATT…DRMH), 69-88 (TDWT…ASVQ), 100-134 (SHLV…NGHQ), and 147-193 (SPQP…PSSD). Residues 79–88 (QAEHNKASVQ) are compositionally biased toward basic and acidic residues. Positions 105–134 (QPTQNSHHGSWAPTTTHHLSPLSPASNGHQ) are enriched in polar residues. The span at 155–170 (GLRDPLHDDAGSHDNQ) shows a compositional bias: basic and acidic residues. A POU-specific domain is found at 187–261 (EDAPSSDDLE…LLNKWLEETD (75 aa)). A DNA-binding region (homeobox) is located at residues 279 to 338 (KRKKRTSIEVGVKGALENHFLKCPKPSAHEITTLAGTLQLEKEVVRVWFCNRRQKEKRMT).

It belongs to the POU transcription factor family. Class-3 subfamily. In terms of tissue distribution, predominantly expressed in the embryonic and adult central nervous system.

The protein localises to the nucleus. Transcription factor that may play important roles in patterning the embryonic brain. Could directly respond to the reception of the sonic hedgehog (shh) signal. This is POU domain, class 3, transcription factor 1 (pou3f1) from Danio rerio (Zebrafish).